We begin with the raw amino-acid sequence, 212 residues long: MKWKEFIINQTKQDYLRNIIQKVNTIENHQVVYPLKKQRFRCFNFFDIEQTKVVILGQDPYHTPKMANGLCFSVDLGNNLPGSLVNIFKALEYDLQIKRTNPDLSDWAKQGVLLLNTVLTVNAHQANSHKDFGYDQLIKNAFIELKKQKHVVYLLWGKQAMSYIDLIDKDHNLILCAPHPSPLSAHRGFLTCKHFSACNDYLIKHFRTPIKW.

The active-site Proton acceptor is D59.

It belongs to the uracil-DNA glycosylase (UDG) superfamily. UNG family.

It is found in the cytoplasm. The enzyme catalyses Hydrolyzes single-stranded DNA or mismatched double-stranded DNA and polynucleotides, releasing free uracil.. Functionally, excises uracil residues from the DNA which can arise as a result of misincorporation of dUMP residues by DNA polymerase or due to deamination of cytosine. The chain is Uracil-DNA glycosylase from Ureaplasma urealyticum serovar 10 (strain ATCC 33699 / Western).